The primary structure comprises 407 residues: 8-amino-7-oxononanoate synthase (407 aa).

Arginine 24 is a substrate binding site. A pyridoxal 5'-phosphate-binding site is contributed by 111 to 112 (GF). Histidine 137 lines the substrate pocket. Residues serine 183, histidine 211, and threonine 239 each coordinate pyridoxal 5'-phosphate. Residue lysine 242 is modified to N6-(pyridoxal phosphate)lysine. A substrate-binding site is contributed by threonine 356.

This sequence belongs to the class-II pyridoxal-phosphate-dependent aminotransferase family. BioF subfamily. Homodimer. The cofactor is pyridoxal 5'-phosphate.

It catalyses the reaction 6-carboxyhexanoyl-[ACP] + L-alanine + H(+) = (8S)-8-amino-7-oxononanoate + holo-[ACP] + CO2. The protein operates within cofactor biosynthesis; biotin biosynthesis. Its function is as follows. Catalyzes the decarboxylative condensation of pimeloyl-[acyl-carrier protein] and L-alanine to produce 8-amino-7-oxononanoate (AON), [acyl-carrier protein], and carbon dioxide. The protein is 8-amino-7-oxononanoate synthase of Stenotrophomonas maltophilia (strain R551-3).